A 185-amino-acid chain; its full sequence is ATP-dependent protease subunit HslV (185 aa).

The active site involves threonine 2. Residues glycine 157, cysteine 160, and threonine 163 each coordinate Na(+).

The protein belongs to the peptidase T1B family. HslV subfamily. In terms of assembly, a double ring-shaped homohexamer of HslV is capped on each side by a ring-shaped HslU homohexamer. The assembly of the HslU/HslV complex is dependent on binding of ATP.

It localises to the cytoplasm. It carries out the reaction ATP-dependent cleavage of peptide bonds with broad specificity.. Allosterically activated by HslU binding. Functionally, protease subunit of a proteasome-like degradation complex believed to be a general protein degrading machinery. In Idiomarina loihiensis (strain ATCC BAA-735 / DSM 15497 / L2-TR), this protein is ATP-dependent protease subunit HslV.